The chain runs to 342 residues: N-acetyl-gamma-glutamyl-phosphate reductase (342 aa).

Cysteine 146 is an active-site residue.

This sequence belongs to the NAGSA dehydrogenase family. Type 1 subfamily.

The protein resides in the cytoplasm. The enzyme catalyses N-acetyl-L-glutamate 5-semialdehyde + phosphate + NADP(+) = N-acetyl-L-glutamyl 5-phosphate + NADPH + H(+). It participates in amino-acid biosynthesis; L-arginine biosynthesis; N(2)-acetyl-L-ornithine from L-glutamate: step 3/4. Catalyzes the NADPH-dependent reduction of N-acetyl-5-glutamyl phosphate to yield N-acetyl-L-glutamate 5-semialdehyde. This is N-acetyl-gamma-glutamyl-phosphate reductase from Frankia casuarinae (strain DSM 45818 / CECT 9043 / HFP020203 / CcI3).